The following is a 183-amino-acid chain: MQAPRAALVFALVIALVPVGRGNYEELENSGDTTVESERPNKVTIPSTFAAVTIKETLNANINSTNFAPDENQLEFILMVLIPLILLVLLLLSVVFLATYYKRKRTKQEPSSQGSQSALQTYELGSENVKVPIFEEDTPSVMEIEMEELDKWMNSMNRNADFECLPTLKEEKESNHNPSDSES.

The first 22 residues, 1 to 22 (MQAPRAALVFALVIALVPVGRG), serve as a signal peptide directing secretion. The Extracellular portion of the chain corresponds to 23–75 (NYEELENSGDTTVESERPNKVTIPSTFAAVTIKETLNANINSTNFAPDENQLE). Residues 76–96 (FILMVLIPLILLVLLLLSVVF) form a helical membrane-spanning segment. At 97–183 (LATYYKRKRT…SNHNPSDSES (87 aa)) the chain is on the cytoplasmic side. The segment at 163–183 (ECLPTLKEEKESNHNPSDSES) is disordered. Phosphoserine is present on serine 179.

The protein localises to the membrane. This is Transmembrane protein 154 (TMEM154) from Homo sapiens (Human).